The following is a 355-amino-acid chain: Adenine deaminase (355 aa).

Zn(2+) is bound by residues His-24, His-26, and His-204. The Proton donor role is filled by Glu-207. Asp-285 contacts Zn(2+). Asp-286 contacts substrate.

This sequence belongs to the metallo-dependent hydrolases superfamily. Adenosine and AMP deaminases family. Adenine deaminase type 2 subfamily. Zn(2+) is required as a cofactor.

It catalyses the reaction adenine + H2O + H(+) = hypoxanthine + NH4(+). Catalyzes the hydrolytic deamination of adenine to hypoxanthine. Plays an important role in the purine salvage pathway and in nitrogen catabolism. The chain is Adenine deaminase from Geotalea uraniireducens (strain Rf4) (Geobacter uraniireducens).